Reading from the N-terminus, the 109-residue chain is Phosphoribosyl-AMP cyclohydrolase (109 aa).

D80 lines the Mg(2+) pocket. C81 contacts Zn(2+). 2 residues coordinate Mg(2+): D82 and D84. C97 and C104 together coordinate Zn(2+).

This sequence belongs to the PRA-CH family. Homodimer. It depends on Mg(2+) as a cofactor. Zn(2+) is required as a cofactor.

Its subcellular location is the cytoplasm. The enzyme catalyses 1-(5-phospho-beta-D-ribosyl)-5'-AMP + H2O = 1-(5-phospho-beta-D-ribosyl)-5-[(5-phospho-beta-D-ribosylamino)methylideneamino]imidazole-4-carboxamide. Its pathway is amino-acid biosynthesis; L-histidine biosynthesis; L-histidine from 5-phospho-alpha-D-ribose 1-diphosphate: step 3/9. Catalyzes the hydrolysis of the adenine ring of phosphoribosyl-AMP. The sequence is that of Phosphoribosyl-AMP cyclohydrolase from Clostridium beijerinckii (strain ATCC 51743 / NCIMB 8052) (Clostridium acetobutylicum).